We begin with the raw amino-acid sequence, 301 residues long: MRFKGLDLNLLVVLDALLTARNLTAAASSINLSQPAMSAAVARLRNYFNDELFTMSGRERVLTPRAETLAPAVRGALLHIQCSIISWDPFNPAQSDRRFRIILSDFATLVFFEKVVERVAREAPAVSFELRPLDNDPDELLRRGDVDFVILPEFFMSSAHPRAALFDETFVCVGCPTNKQLPRQLTFERYVSMKHIAFRVGGAQMPSIEEQFLLEHGLKRRVEIVVQAFSMIPPMVSGTARIATMPFRLVQHFKKTFPLRIIELPRPLPTFTEAVQWPTLHNSDPASIWMRQIMLQEASRM.

The HTH lysR-type domain maps to 6–63 (LDLNLLVVLDALLTARNLTAAASSINLSQPAMSAAVARLRNYFNDELFTMSGRERVLT). A DNA-binding region (H-T-H motif) is located at residues 23-43 (LTAAASSINLSQPAMSAAVAR).

The protein belongs to the LysR transcriptional regulatory family.

NodD regulates the expression of the nodABCFE genes which encode other nodulation proteins. NodD is also a negative regulator of its own expression. Binds flavonoids as inducers. In Mesorhizobium japonicum (strain LMG 29417 / CECT 9101 / MAFF 303099) (Mesorhizobium loti (strain MAFF 303099)), this protein is Nodulation protein D 3 (nodD3).